We begin with the raw amino-acid sequence, 193 residues long: Pyridoxal 5'-phosphate synthase subunit PdxT (193 aa).

L-glutamine is bound at residue 50–52; it reads GES. Cys-82 serves as the catalytic Nucleophile. L-glutamine contacts are provided by residues Arg-109 and 136-137; that span reads IR. Active-site charge relay system residues include His-172 and Glu-174.

This sequence belongs to the glutaminase PdxT/SNO family. In terms of assembly, in the presence of PdxS, forms a dodecamer of heterodimers. Only shows activity in the heterodimer.

It catalyses the reaction aldehydo-D-ribose 5-phosphate + D-glyceraldehyde 3-phosphate + L-glutamine = pyridoxal 5'-phosphate + L-glutamate + phosphate + 3 H2O + H(+). The catalysed reaction is L-glutamine + H2O = L-glutamate + NH4(+). The protein operates within cofactor biosynthesis; pyridoxal 5'-phosphate biosynthesis. In terms of biological role, catalyzes the hydrolysis of glutamine to glutamate and ammonia as part of the biosynthesis of pyridoxal 5'-phosphate. The resulting ammonia molecule is channeled to the active site of PdxS. The chain is Pyridoxal 5'-phosphate synthase subunit PdxT from Streptococcus pneumoniae serotype 19F (strain G54).